Reading from the N-terminus, the 882-residue chain is DNA mismatch repair protein MutS (882 aa).

Residues 1–22 are disordered; that stretch reads MTLPSDFPLEPPATNKDPHRDY. 662–669 contributes to the ATP binding site; the sequence is GPNASGKS.

This sequence belongs to the DNA mismatch repair MutS family.

In terms of biological role, this protein is involved in the repair of mismatches in DNA. It is possible that it carries out the mismatch recognition step. This protein has a weak ATPase activity. The sequence is that of DNA mismatch repair protein MutS from Microcystis aeruginosa (strain NIES-843 / IAM M-2473).